We begin with the raw amino-acid sequence, 197 residues long: NAD(P)H-quinone oxidoreductase subunit 6, chloroplastic (197 aa).

Transmembrane regions (helical) follow at residues 10 to 30 (FVLA…VLLV), 39 to 59 (LGLV…DFVA), 60 to 80 (AAQL…AVMI), 94 to 114 (IGYI…SFVI), and 147 to 167 (LLGE…AALV).

The protein belongs to the complex I subunit 6 family. As to quaternary structure, NDH is composed of at least 16 different subunits, 5 of which are encoded in the nucleus.

Its subcellular location is the plastid. It localises to the chloroplast thylakoid membrane. The catalysed reaction is a plastoquinone + NADH + (n+1) H(+)(in) = a plastoquinol + NAD(+) + n H(+)(out). The enzyme catalyses a plastoquinone + NADPH + (n+1) H(+)(in) = a plastoquinol + NADP(+) + n H(+)(out). In terms of biological role, NDH shuttles electrons from NAD(P)H:plastoquinone, via FMN and iron-sulfur (Fe-S) centers, to quinones in the photosynthetic chain and possibly in a chloroplast respiratory chain. The immediate electron acceptor for the enzyme in this species is believed to be plastoquinone. Couples the redox reaction to proton translocation, and thus conserves the redox energy in a proton gradient. The sequence is that of NAD(P)H-quinone oxidoreductase subunit 6, chloroplastic (ndhG) from Adiantum capillus-veneris (Maidenhair fern).